The primary structure comprises 254 residues: Large ribosomal subunit protein uL2B (254 aa).

Lys46 is covalently cross-linked (Glycyl lysine isopeptide (Lys-Gly) (interchain with G-Cter in ubiquitin)). Position 52 is a phosphoserine (Ser52). Residue Lys93 forms a Glycyl lysine isopeptide (Lys-Gly) (interchain with G-Cter in ubiquitin) linkage. Ser95 bears the Phosphoserine mark. Residues Lys119 and Lys145 each participate in a glycyl lysine isopeptide (Lys-Gly) (interchain with G-Cter in ubiquitin) cross-link. Residues Ser159, Ser160, and Ser249 each carry the phosphoserine modification.

This sequence belongs to the universal ribosomal protein uL2 family. In terms of assembly, component of the large ribosomal subunit (LSU). Mature yeast ribosomes consist of a small (40S) and a large (60S) subunit. The 40S small subunit contains 1 molecule of ribosomal RNA (18S rRNA) and 33 different proteins (encoded by 57 genes). The large 60S subunit contains 3 rRNA molecules (25S, 5.8S and 5S rRNA) and 46 different proteins (encoded by 81 genes).

Its subcellular location is the cytoplasm. Functionally, component of the ribosome, a large ribonucleoprotein complex responsible for the synthesis of proteins in the cell. The small ribosomal subunit (SSU) binds messenger RNAs (mRNAs) and translates the encoded message by selecting cognate aminoacyl-transfer RNA (tRNA) molecules. The large subunit (LSU) contains the ribosomal catalytic site termed the peptidyl transferase center (PTC), which catalyzes the formation of peptide bonds, thereby polymerizing the amino acids delivered by tRNAs into a polypeptide chain. The nascent polypeptides leave the ribosome through a tunnel in the LSU and interact with protein factors that function in enzymatic processing, targeting, and the membrane insertion of nascent chains at the exit of the ribosomal tunnel. The sequence is that of Large ribosomal subunit protein uL2B from Saccharomyces cerevisiae (strain ATCC 204508 / S288c) (Baker's yeast).